A 317-amino-acid polypeptide reads, in one-letter code: Melanocyte-stimulating hormone receptor (317 aa).

Residues 1–37 (MPVLGSQRRLLGSLNCTPPATFSLTLAPNRTGPQCLE) are Extracellular-facing. Asn-29 is a glycosylation site (N-linked (GlcNAc...) asparagine). Residues 38–63 (VSIPDGLFLSLGLVSLVENVLVVAAI) traverse the membrane as a helical segment. Topologically, residues 64 to 72 (AKNRNLHSP) are cytoplasmic. A helical transmembrane segment spans residues 73-93 (MYYFICCLAVSDLLVSVSNVL). At 94–118 (ETAVMLLLEAGALAARAAVVQQLDN) the chain is on the extracellular side. Residues 119–140 (VIDVLICGSMVSSLCFLGAIAM) form a helical membrane-spanning segment. The Cytoplasmic portion of the chain corresponds to 141-163 (DRYISIFYALRYHSVVTLPRAWR). A helical membrane pass occupies residues 164-183 (IIAAIWVASILTSLLFITYY). Residues 184-191 (NHTVVLLC) lie on the Extracellular side of the membrane. A helical membrane pass occupies residues 192–211 (LVGFFIAMLALMAILYVHML). Topologically, residues 212–240 (ARACQHARDIARLQKRQHPIHQGFGLKGA) are cytoplasmic. A helical transmembrane segment spans residues 241–266 (ATLTILLGVFFLCWGPFFLHLSLIVL). The Extracellular portion of the chain corresponds to 267–279 (CPQHPTCGCIFKN). Residues 280-300 (FNLFLALIICNAIVDPLIYAF) traverse the membrane as a helical segment. Residues 301-317 (RSQELRKTLQEVLQCSW) lie on the Cytoplasmic side of the membrane. Residue Cys-315 is the site of S-palmitoyl cysteine attachment.

The protein belongs to the G-protein coupled receptor 1 family. Interacts with MGRN1, but does not undergo MGRN1-mediated ubiquitination; this interaction competes with GNAS-binding and thus inhibits agonist-induced cAMP production. Interacts with OPN3; the interaction results in a decrease in MC1R-mediated cAMP signaling and ultimately a decrease in melanin production in melanocytes.

Its subcellular location is the cell membrane. Functionally, receptor for MSH (alpha, beta and gamma) and ACTH. The activity of this receptor is mediated by G proteins which activate adenylate cyclase. Mediates melanogenesis, the production of eumelanin (black/brown) and phaeomelanin (red/yellow), via regulation of cAMP signaling in melanocytes. The sequence is that of Melanocyte-stimulating hormone receptor (MC1R) from Alces alces alces (European moose).